The chain runs to 191 residues: Dirigent protein 3 (191 aa).

An N-terminal signal peptide occupies residues 1-21 (MSKLILILTAQILLLTATALA). N-linked (GlcNAc...) asparagine glycans are attached at residues Asn96 and Asn131.

Belongs to the plant dirigent protein family. As to quaternary structure, homodimer.

It localises to the secreted. The protein localises to the extracellular space. The protein resides in the apoplast. Functionally, dirigent proteins impart stereoselectivity on the phenoxy radical-coupling reaction, yielding optically active lignans from two molecules of coniferyl alcohol in the biosynthesis of lignans, flavonolignans, and alkaloids and thus plays a central role in plant secondary metabolism. The protein is Dirigent protein 3 (DIR3) of Arabidopsis thaliana (Mouse-ear cress).